Reading from the N-terminus, the 311-residue chain is NAD kinase (311 aa).

Catalysis depends on Asp-67, which acts as the Proton acceptor. NAD(+)-binding positions include 67-68, Arg-72, 140-141, Arg-151, Asp-170, 181-186, and Gln-240; these read DG, ND, and TAYSLS. Positions 278-287 are enriched in basic and acidic residues; it reads LKEGGSRQDD. The interval 278–311 is disordered; the sequence is LKEGGSRQDDENPAATVNPETDSKYPHSHPGSTG.

This sequence belongs to the NAD kinase family. A divalent metal cation is required as a cofactor.

It is found in the cytoplasm. It catalyses the reaction NAD(+) + ATP = ADP + NADP(+) + H(+). Involved in the regulation of the intracellular balance of NAD and NADP, and is a key enzyme in the biosynthesis of NADP. Catalyzes specifically the phosphorylation on 2'-hydroxyl of the adenosine moiety of NAD to yield NADP. The polypeptide is NAD kinase (Moorella thermoacetica (strain ATCC 39073 / JCM 9320)).